Consider the following 384-residue polypeptide: DNA dC-&gt;dU-editing enzyme APOBEC-3G (384 aa).

Residues 1 to 60 (MKPHFRNPVERMYQDTFSDNFYNRPILSHRNTVWLCYEVKTKGPSRPPLDAKIFRGQVYS) form an essential for cytoplasmic localization region. 2 CMP/dCMP-type deaminase domains span residues 29–138 (HRNT…LRSL) and 214–328 (GRHE…LRTL). The residue at position 32 (T32) is a Phosphothreonine; by PKA. Zn(2+) is bound by residues H65, C97, and C100. A necessary for homooligomerization region spans residues 209 to 336 (ELWVRGRHET…TLAKAGAKIS (128 aa)). The segment at 213–215 (RGR) is interaction with DNA. At T218 the chain carries Phosphothreonine; by PKA and CAMK2. Residue H257 participates in Zn(2+) binding. The active-site Proton donor is E259. 2 residues coordinate Zn(2+): C288 and C291. Residues 313–320 (RIYDDQGR) are interaction with DNA.

This sequence belongs to the cytidine and deoxycytidylate deaminase family. In terms of assembly, homodimer. Homooligomer. Can bind RNA to form ribonucleoprotein complexes of high-molecular-mass (HMM) or low-molecular-mass (LMM). HMM is inactive and heterogeneous in protein composition because of binding nonselectively to cellular RNAs, which in turn are associated with variety of cellular proteins. The LMM form which is enzymatically active has few or no RNAs associated. Its ability to form homooligomer is distinct from its ability to assemble into HMM. Interacts with APOBEC3B, APOBEC3F, MOV10, AGO2, EIF4E, EIF4ENIF1, DCP2 and DDX6 in an RNA-dependent manner. Interacts with AGO1, AGO3 and PKA/PRKACA. Requires Zn(2+) as cofactor.

The protein localises to the cytoplasm. It is found in the nucleus. The protein resides in the P-body. The enzyme catalyses a 2'-deoxycytidine in single-stranded DNA + H2O + H(+) = a 2'-deoxyuridine in single-stranded DNA + NH4(+). In terms of biological role, DNA deaminase (cytidine deaminase) which acts as an inhibitor of retrovirus replication and retrotransposon mobility via deaminase-dependent and -independent mechanisms. Exhibits antiviral activity against vif-deficient: HIV-1 and simian immunodeficiency viruses (SIVs) and also against simian foamy virus (SFV). After the penetration of retroviral nucleocapsids into target cells of infection and the initiation of reverse transcription, it can induce the conversion of cytosine to uracil in the minus-sense single-strand viral DNA, leading to G-to-A hypermutations in the subsequent plus-strand viral DNA. The resultant detrimental levels of mutations in the proviral genome, along with a deamination-independent mechanism that works prior to the proviral integration, together exert efficient antiretroviral effects in infected target cells. Selectively targets single-stranded DNA and does not deaminate double-stranded DNA or single- or double-stranded RNA. May inhibit the mobility of LTR retrotransposons. The protein is DNA dC-&gt;dU-editing enzyme APOBEC-3G (APOBEC3G) of Pan troglodytes (Chimpanzee).